The chain runs to 69 residues: Cold shock-like protein CspE (69 aa).

One can recognise a CSD domain in the interval glycine 6 to valine 66.

It localises to the cytoplasm. The protein is Cold shock-like protein CspE (cspE) of Escherichia coli O6:H1 (strain CFT073 / ATCC 700928 / UPEC).